Here is a 246-residue protein sequence, read N- to C-terminus: Probable transcriptional regulatory protein WRi_002620 (246 aa).

A disordered region spans residues 1–22 (MAGHSQFSNIKHRKGAQDAKRS).

This sequence belongs to the TACO1 family.

The protein localises to the cytoplasm. The sequence is that of Probable transcriptional regulatory protein WRi_002620 from Wolbachia sp. subsp. Drosophila simulans (strain wRi).